A 62-amino-acid polypeptide reads, in one-letter code: Probable tautomerase RSc0807 (62 aa).

Proline 2 serves as the catalytic Proton acceptor; via imino nitrogen.

The protein belongs to the 4-oxalocrotonate tautomerase family.

The sequence is that of Probable tautomerase RSc0807 from Ralstonia nicotianae (strain ATCC BAA-1114 / GMI1000) (Ralstonia solanacearum).